Here is a 112-residue protein sequence, read N- to C-terminus: Prostatic steroid-binding protein C2 (112 aa).

The first 20 residues, 1-20 (MRLSLCLLTILVVCCYEANG), serve as a signal peptide directing secretion. Q21 carries the post-translational modification Pyrrolidone carboxylic acid.

It belongs to the secretoglobin family. Lipophilin subfamily. In terms of assembly, prostatein is composed of three different peptides called C1, C2 and C3. These form covalent C1:C3 (F) and C2:C3 (S) heterodimers whose noncovalent association forms tetrameric (C1:C3/C3:C2) prostatein molecules. Post-translationally, linked by three disulfide bonds to C3. In terms of processing, the N-terminus is blocked.

Its subcellular location is the secreted. Part of prostatein which is the major secretory glycoprotein of ventral prostate gland. In Rattus norvegicus (Rat), this protein is Prostatic steroid-binding protein C2 (Psbpc2).